The following is a 224-amino-acid chain: Non-structural protein V (224 aa).

The span at 54–65 (QKNIQHPTASHQ) shows a compositional bias: polar residues. 2 disordered regions span residues 54 to 96 (QKNI…DPEP) and 150 to 171 (TEFK…GGHR). Residues His170, Cys189, Cys193, Cys205, Cys207, Cys210, Cys214, and Cys217 each contribute to the Zn(2+) site.

It belongs to the paramyxoviruses V protein family. In terms of assembly, interacts with host IFIH1/MDA5 and DHX58/LGP2. Forms with host DDB1, CUL4A, STAT1, STAT2 and STAT3 the mumps virus V-dependent complex (VDC).

The protein localises to the virion. It localises to the host cytoplasm. In terms of biological role, plays an essential role in the inhibition of host immune response. Prevents the establishment of cellular antiviral state by blocking interferon-alpha/beta (IFN-alpha/beta) production and signaling pathway. Interacts with host IFIH1/MDA5 and DHX58/LGP2 to inhibit the transduction pathway involved in the activation of IFN-beta promoter, thus protecting the virus against cell antiviral state. Blocks the type I and II interferon signaling pathways by interacting with host STAT1, STAT2 and STAT3, and mediating their ubiquitination and subsequent proteasomal degradation. In Mumps virus (strain SBL) (MuV), this protein is Non-structural protein V.